A 417-amino-acid chain; its full sequence is WD repeat and FYVE domain-containing protein 2 (417 aa).

WD repeat units follow at residues G29–P68, C119–G157, A202–Y241, and G245–P284. Residues W286–K357 form an FYVE-type zinc finger. Zn(2+) contacts are provided by C292, C295, C319, C322, C327, C330, C349, and C352. One copy of the WD 5 repeat lies at E373 to S412.

Functionally, plays a role in coelomocyte endocytosis. This chain is WD repeat and FYVE domain-containing protein 2, found in Caenorhabditis briggsae.